The following is a 243-amino-acid chain: Probable septum site-determining protein MinC (243 aa).

Belongs to the MinC family. Interacts with MinD and FtsZ.

Functionally, cell division inhibitor that blocks the formation of polar Z ring septums. Rapidly oscillates between the poles of the cell to destabilize FtsZ filaments that have formed before they mature into polar Z rings. Prevents FtsZ polymerization. This chain is Probable septum site-determining protein MinC, found in Agathobacter rectalis (strain ATCC 33656 / DSM 3377 / JCM 17463 / KCTC 5835 / VPI 0990) (Eubacterium rectale).